The primary structure comprises 426 residues: Glutamate-1-semialdehyde 2,1-aminomutase (426 aa).

The residue at position 265 (lysine 265) is an N6-(pyridoxal phosphate)lysine.

The protein belongs to the class-III pyridoxal-phosphate-dependent aminotransferase family. HemL subfamily. In terms of assembly, homodimer. Pyridoxal 5'-phosphate is required as a cofactor.

Its subcellular location is the cytoplasm. It catalyses the reaction (S)-4-amino-5-oxopentanoate = 5-aminolevulinate. It functions in the pathway porphyrin-containing compound metabolism; protoporphyrin-IX biosynthesis; 5-aminolevulinate from L-glutamyl-tRNA(Glu): step 2/2. This is Glutamate-1-semialdehyde 2,1-aminomutase from Salmonella paratyphi A (strain ATCC 9150 / SARB42).